Here is a 149-residue protein sequence, read N- to C-terminus: Calmodulin-3 (149 aa).

An N-acetylalanine modification is found at Ala-2. 4 consecutive EF-hand domains span residues 8-43, 44-79, 81-116, and 117-149; these read DQIA…LGQN, PTEA…KMKD, DSEE…LGEK, and LTDE…MMAK. Ca(2+) contacts are provided by Asp-21, Asp-23, Asp-25, Cys-27, Glu-32, Asp-57, Asp-59, Asn-61, Thr-63, Glu-68, Asp-94, Asp-96, Asn-98, and Glu-105. At Lys-116 the chain carries N6,N6,N6-trimethyllysine. Residues Asp-130, Asp-132, Asp-134, Gln-136, and Glu-141 each contribute to the Ca(2+) site.

Belongs to the calmodulin family.

Functionally, calmodulin mediates the control of a large number of enzymes, ion channels and other proteins by Ca(2+). Among the enzymes to be stimulated by the calmodulin-Ca(2+) complex are a number of protein kinases and phosphatases. This is Calmodulin-3 (CAM3) from Oryza sativa subsp. indica (Rice).